Here is a 108-residue protein sequence, read N- to C-terminus: MTVKVRKGDTVLVIAGKDKGAKGKVIAAYPRQDKVLVEGVNRVKKHTRISTTQRGAKTGGIVTQEAPIHVSNVMVLDSDGKPTRVGYRIDDNGQKVRIARSTGKDLSS.

It belongs to the universal ribosomal protein uL24 family. Part of the 50S ribosomal subunit.

Functionally, one of two assembly initiator proteins, it binds directly to the 5'-end of the 23S rRNA, where it nucleates assembly of the 50S subunit. In terms of biological role, one of the proteins that surrounds the polypeptide exit tunnel on the outside of the subunit. The sequence is that of Large ribosomal subunit protein uL24 from Salinispora tropica (strain ATCC BAA-916 / DSM 44818 / JCM 13857 / NBRC 105044 / CNB-440).